A 330-amino-acid polypeptide reads, in one-letter code: Adenylate isopentenyltransferase 8, chloroplastic (330 aa).

The transit peptide at 1-35 directs the protein to the chloroplast; it reads MQNLTSTFVSPSMIPITSPRLRLPPPRSVVPMTTV. 50-57 is an ATP binding site; the sequence is GATGSGKS.

Belongs to the IPP transferase family. In terms of tissue distribution, expressed in roots and in immature seeds with highest expression in the chalazal endosperm.

The protein resides in the plastid. It localises to the chloroplast. The catalysed reaction is dimethylallyl diphosphate + ADP = N(6)-(dimethylallyl)adenosine 5'-diphosphate + diphosphate. The enzyme catalyses dimethylallyl diphosphate + ATP = N(6)-(dimethylallyl)adenosine 5'-triphosphate + diphosphate. Its function is as follows. Involved in cytokinin biosynthesis. Catalyzes the transfer of an isopentenyl group from dimethylallyl diphosphate (DMAPP) to ATP and ADP. In Arabidopsis thaliana (Mouse-ear cress), this protein is Adenylate isopentenyltransferase 8, chloroplastic (IPT8).